A 453-amino-acid polypeptide reads, in one-letter code: uncharacterized protein (453 aa).

[4Fe-4S] cluster is bound by residues Cys74, Cys80, Cys83, and Cys162. S-adenosyl-L-methionine contacts are provided by Gln286, Tyr315, Glu336, and Asp384. The active-site Nucleophile is Cys411.

It belongs to the class I-like SAM-binding methyltransferase superfamily. RNA M5U methyltransferase family.

This is an uncharacterized protein from Staphylococcus aureus (strain MRSA252).